The sequence spans 587 residues: Aspartate--tRNA ligase (587 aa).

Glu-174 is an L-aspartate binding site. Positions 198-201 (QITK) are aspartate. Arg-220 lines the L-aspartate pocket. ATP is bound by residues 220–222 (RDE) and Gln-229. L-aspartate is bound at residue His-443. Glu-477 contributes to the ATP binding site. Arg-484 lines the L-aspartate pocket. Residue 529-532 (GLDR) participates in ATP binding.

This sequence belongs to the class-II aminoacyl-tRNA synthetase family. Type 1 subfamily. Homodimer.

The protein resides in the cytoplasm. The catalysed reaction is tRNA(Asp) + L-aspartate + ATP = L-aspartyl-tRNA(Asp) + AMP + diphosphate. Its function is as follows. Catalyzes the attachment of L-aspartate to tRNA(Asp) in a two-step reaction: L-aspartate is first activated by ATP to form Asp-AMP and then transferred to the acceptor end of tRNA(Asp). The chain is Aspartate--tRNA ligase from Streptococcus pneumoniae (strain Hungary19A-6).